Consider the following 306-residue polypeptide: Dihydroorotate dehydrogenase B (NAD(+)), catalytic subunit (306 aa).

FMN contacts are provided by residues serine 24 and 48-49 (KA). Residues lysine 48 and 72–76 (NAIGL) each bind substrate. Asparagine 102 and asparagine 130 together coordinate FMN. Asparagine 130 lines the substrate pocket. Cysteine 133 serves as the catalytic Nucleophile. FMN is bound by residues lysine 168 and isoleucine 194. 195 to 196 (NT) contacts substrate. Residues glycine 220, 246–247 (GG), and 268–269 (GT) contribute to the FMN site.

This sequence belongs to the dihydroorotate dehydrogenase family. Type 1 subfamily. In terms of assembly, heterotetramer of 2 PyrK and 2 PyrD type B subunits. FMN is required as a cofactor.

The protein localises to the cytoplasm. It catalyses the reaction (S)-dihydroorotate + NAD(+) = orotate + NADH + H(+). The protein operates within pyrimidine metabolism; UMP biosynthesis via de novo pathway; orotate from (S)-dihydroorotate (NAD(+) route): step 1/1. In terms of biological role, catalyzes the conversion of dihydroorotate to orotate with NAD(+) as electron acceptor. This chain is Dihydroorotate dehydrogenase B (NAD(+)), catalytic subunit (pyrD), found in Malacoplasma penetrans (strain HF-2) (Mycoplasma penetrans).